The primary structure comprises 704 residues: Polyribonucleotide nucleotidyltransferase (704 aa).

Residues aspartate 486 and aspartate 492 each contribute to the Mg(2+) site. The region spanning 553-612 is the KH domain; it reads PRIYTMKINPEKIKDVIGKGGSVIRALTDETGTTIEIEDDGTIKIAATDGDKAKHAIRRI. The region spanning 622–690 is the S1 motif domain; it reads GRIYAGKVTR…RQGRIRLSIK (69 aa).

This sequence belongs to the polyribonucleotide nucleotidyltransferase family. In terms of assembly, component of the RNA degradosome, which is a multiprotein complex involved in RNA processing and mRNA degradation. Mg(2+) serves as cofactor.

Its subcellular location is the cytoplasm. It catalyses the reaction RNA(n+1) + phosphate = RNA(n) + a ribonucleoside 5'-diphosphate. Functionally, involved in mRNA degradation. Catalyzes the phosphorolysis of single-stranded polyribonucleotides processively in the 3'- to 5'-direction. The sequence is that of Polyribonucleotide nucleotidyltransferase from Yersinia pseudotuberculosis serotype IB (strain PB1/+).